The following is a 322-amino-acid chain: Major serine/threonine-protein phosphatase PP2A-2 catalytic subunit (322 aa).

Residues Asp-70, His-72, Asp-98, and Asn-130 each contribute to the Mn(2+) site. Catalysis depends on His-131, which acts as the Proton donor. Residues His-180 and His-254 each contribute to the Mn(2+) site. Leucine methyl ester is present on Leu-322.

Belongs to the PPP phosphatase family. PP-2A subfamily. The cofactor is Mn(2+).

It catalyses the reaction O-phospho-L-seryl-[protein] + H2O = L-seryl-[protein] + phosphate. It carries out the reaction O-phospho-L-threonyl-[protein] + H2O = L-threonyl-[protein] + phosphate. Functionally, essential role in cell cycle control. PP2A may be involved in controlling the entry into mitosis, possibly acting as an inhibitor. The polypeptide is Major serine/threonine-protein phosphatase PP2A-2 catalytic subunit (ppa2) (Schizosaccharomyces pombe (strain 972 / ATCC 24843) (Fission yeast)).